Here is a 175-residue protein sequence, read N- to C-terminus: Protein CENTRORADIALIS-like (175 aa).

It belongs to the phosphatidylethanolamine-binding protein family. As to expression, expressed in tissues surrounding vascular bundles in hypocotyl of 2-week-old plants.

Its subcellular location is the cytoplasm. Its function is as follows. May form complexes with phosphorylated ligands by interfering with kinases and their effectors. Can substitute for TERMINAL FLOWER 1 (in vitro). The protein is Protein CENTRORADIALIS-like (CEN) of Arabidopsis thaliana (Mouse-ear cress).